The sequence spans 86 residues: Anti-adapter protein IraP (86 aa).

The stretch at 1 to 36 (MKNLIAELLLKLAQKEEESKELCAQVEALEIIVTAM) forms a coiled coil.

Belongs to the IraP family. Interacts with RssB.

The protein localises to the cytoplasm. Inhibits RpoS proteolysis by regulating RssB activity, thereby increasing the stability of the sigma stress factor RpoS especially during phosphate starvation, but also in stationary phase and during nitrogen starvation. Its effect on RpoS stability is due to its interaction with RssB, which probably blocks the interaction of RssB with RpoS, and the consequent delivery of the RssB-RpoS complex to the ClpXP protein degradation pathway. This is Anti-adapter protein IraP from Shigella boydii serotype 4 (strain Sb227).